The chain runs to 140 residues: MIVVRKALPEEHKEILQVAKQSKYTKDFSNQVMFSSEAAYNKGWIHVAEHEGEIRGFYCIREKVRAPETVLYFIGVAQEAKGLGLGKKLIEHIMATTRHRRLTLNVNKQNEEARAFYDRLGFTVAGESLGGEGLALFKEW.

The N-acetyltransferase domain maps to 2 to 140; that stretch reads IVVRKALPEE…GEGLALFKEW (139 aa).

The protein belongs to the acetyltransferase family.

The catalysed reaction is 5-aminomethyl-dUMP in DNA + acetyl-CoA = 5-acetylaminomethyl-dUMP in DNA + CoA + H(+). Functionally, acetylates 5-aminomethyl-2'-deoxyuridine (5-NmdU) to produce 5-acetylaminomethyl-2'-deoxyuridine (5-AcNmdU) on DNA as a step in the pathway leading to thymidine hypermodifications in the viral genome. As a final result of the pathway of hypermodification, 5-acetylaminomethyl-2'-deoxyuridine (5-AcNmdU) substitutes for a subset of thymidines in the viral DNA. These modifications probably prevent degradation of viral genome by the host restriction-modification antiviral defense system. The chain is 5-NmdU N-acetyltransferase from Pseudomonas aeruginosa.